The following is a 163-amino-acid chain: SsrA-binding protein (163 aa).

Residues 138–157 (EDRRGAIAERESKREMDRAL) show a composition bias toward basic and acidic residues. Positions 138–163 (EDRRGAIAERESKREMDRALARGRRR) are disordered.

Belongs to the SmpB family.

Its subcellular location is the cytoplasm. Functionally, required for rescue of stalled ribosomes mediated by trans-translation. Binds to transfer-messenger RNA (tmRNA), required for stable association of tmRNA with ribosomes. tmRNA and SmpB together mimic tRNA shape, replacing the anticodon stem-loop with SmpB. tmRNA is encoded by the ssrA gene; the 2 termini fold to resemble tRNA(Ala) and it encodes a 'tag peptide', a short internal open reading frame. During trans-translation Ala-aminoacylated tmRNA acts like a tRNA, entering the A-site of stalled ribosomes, displacing the stalled mRNA. The ribosome then switches to translate the ORF on the tmRNA; the nascent peptide is terminated with the 'tag peptide' encoded by the tmRNA and targeted for degradation. The ribosome is freed to recommence translation, which seems to be the essential function of trans-translation. This is SsrA-binding protein from Anaeromyxobacter dehalogenans (strain 2CP-1 / ATCC BAA-258).